The primary structure comprises 57 residues: MAVPFRRTSKTVKRKRRTHFKLSVPGMVECPSCGEAKLAHRVCKACGTYKGKEVISK.

The protein belongs to the bacterial ribosomal protein bL32 family.

The sequence is that of Large ribosomal subunit protein bL32 from Bacillus anthracis (strain A0248).